The following is a 305-amino-acid chain: Uridylate cyclase (305 aa).

Mn(2+)-binding residues include D58 and D102.

This sequence belongs to the adenylyl cyclase class-4/guanylyl cyclase family. Pyrimidine cyclase subfamily. Homodimer. The cofactor is Mn(2+).

The protein resides in the cytoplasm. It carries out the reaction GTP = 3',5'-cyclic GMP + diphosphate. The enzyme catalyses UTP = 3',5'-cyclic UMP + diphosphate. Its function is as follows. Pycsar (pyrimidine cyclase system for antiphage resistance) provides immunity against bacteriophage. The pyrimidine cyclase (PycC) synthesizes cyclic nucleotides in response to infection; these serve as specific second messenger signals. The signals activate the adjacent effector, leading to bacterial cell death and abortive phage infection. A clade D Pycsar system. In terms of biological role, the pyrimidine cyclase gene of a two-gene Pycsar system, generates cyclic UMP (cUMP) from UTP as well as cGMP from GTP to a lesser extent, has little to no activity on ATP or CTP. Expression of this and adjacent effector MePycTM (AC A0A1C5G2D0) probably confers resistance to bacteriophage. The genes are probably only expressed in response to bacteriophage infection. The sequence is that of Uridylate cyclase from Micromonospora echinofusca.